Reading from the N-terminus, the 366-residue chain is uncharacterized protein (366 aa).

The 226-residue stretch at 64–289 folds into the OBG-type G domain; it reads GTVGFIGFPS…LKETMWDYLN (226 aa). GTP is bound by residues 70–77, 116–120, and 247–250; these read GFPSVGKS, DLPGI, and NKID. The 77-residue stretch at 289–365 folds into the TGS domain; that stretch reads NLVRVYTRPR…LDEDVVTIVK (77 aa).

Belongs to the TRAFAC class OBG-HflX-like GTPase superfamily. OBG GTPase family.

This is an uncharacterized protein from Schizosaccharomyces pombe (strain 972 / ATCC 24843) (Fission yeast).